A 389-amino-acid polypeptide reads, in one-letter code: tRNA (cytosine(72)-C(5))-methyltransferase (389 aa).

The region spanning 92–167 (LPVVVANKYA…LAVEVTLPKF (76 aa)) is the PUA domain. S-adenosyl-L-methionine-binding positions include 209-215 (AAAPGGK), aspartate 233, arginine 238, aspartate 260, aspartate 277, and tyrosine 304. Cysteine 327 (nucleophile) is an active-site residue.

It belongs to the class I-like SAM-binding methyltransferase superfamily. RsmB/NOP family.

It carries out the reaction cytidine(72) in tRNA + S-adenosyl-L-methionine = 5-methylcytidine(72) in tRNA + S-adenosyl-L-homocysteine + H(+). It catalyses the reaction cytidine(72) in tRNA(Thr) + S-adenosyl-L-methionine = 5-methylcytidine(72) in tRNA(Thr) + S-adenosyl-L-homocysteine + H(+). The enzyme catalyses cytidine(72) in tRNA(Cys) + S-adenosyl-L-methionine = 5-methylcytidine(72) in tRNA(Cys) + S-adenosyl-L-homocysteine + H(+). S-adenosyl-L-methionine-dependent methyltransferase that specifically methylates the C5 position of cytosine 72 in several tRNAs. This modification appears to slightly promote the thermal stability of P.horikoshii tRNAs, but does not affect their amino acid accepting activity. Four elements in the acceptor stems of tRNAs are essential for substrate recognition by this enzyme: the target site C72, the 3'-CCA terminus, U73 or G73, and the second base pair C2:G71. In Pyrococcus horikoshii (strain ATCC 700860 / DSM 12428 / JCM 9974 / NBRC 100139 / OT-3), this protein is tRNA (cytosine(72)-C(5))-methyltransferase.